The primary structure comprises 669 residues: DNA ligase (669 aa).

NAD(+) contacts are provided by residues 34 to 38, 83 to 84, and Glu114; these read DAEYD and SL. Lys116 (N6-AMP-lysine intermediate) is an active-site residue. Arg137, Glu171, Lys287, and Lys311 together coordinate NAD(+). Cys405, Cys408, Cys423, and Cys428 together coordinate Zn(2+). A BRCT domain is found at 591 to 669; that stretch reads NVESYFAGKT…EERFLQELNK (79 aa).

Belongs to the NAD-dependent DNA ligase family. LigA subfamily. Requires Mg(2+) as cofactor. Mn(2+) is required as a cofactor.

The catalysed reaction is NAD(+) + (deoxyribonucleotide)n-3'-hydroxyl + 5'-phospho-(deoxyribonucleotide)m = (deoxyribonucleotide)n+m + AMP + beta-nicotinamide D-nucleotide.. Its function is as follows. DNA ligase that catalyzes the formation of phosphodiester linkages between 5'-phosphoryl and 3'-hydroxyl groups in double-stranded DNA using NAD as a coenzyme and as the energy source for the reaction. It is essential for DNA replication and repair of damaged DNA. In Bacillus cereus (strain ATCC 14579 / DSM 31 / CCUG 7414 / JCM 2152 / NBRC 15305 / NCIMB 9373 / NCTC 2599 / NRRL B-3711), this protein is DNA ligase.